The following is a 490-amino-acid chain: 4-hydroxybutyryl-CoA dehydratase/vinylacetyl-CoA-Delta-isomerase (490 aa).

Positions 99 and 103 each coordinate [4Fe-4S] cluster. Residues 149–156 and 188–190 contribute to the FAD site; these read MTDPKGDR and HQT. [4Fe-4S] cluster contacts are provided by H292 and C299. FAD is bound by residues H325 and 386-390; that span reads DIAGG.

As to quaternary structure, homotetramer. It depends on FAD as a cofactor. Requires [4Fe-4S] cluster as cofactor.

The enzyme catalyses 4-hydroxybutanoyl-CoA = (2E)-butenoyl-CoA + H2O. It catalyses the reaction vinylacetyl-CoA = (2E)-butenoyl-CoA. In terms of biological role, catalyzes the reversible conversion of 4-hydroxybutyryl-CoA to crotonyl-CoA. The mechanism of the reaction seems to go through three steps: (1) the FAD-dependent oxidation of 4-hydroxybutyryl-CoA to 4-hydroxycrotonyl-CoA; (2) the hydroxyl group is substituted by a hydride derived from the now reduced FAD in an SN2' reaction leading to vinylacetyl-CoA; (3) isomerization to yield crotonyl-CoA. This Clostridium aminobutyricum protein is 4-hydroxybutyryl-CoA dehydratase/vinylacetyl-CoA-Delta-isomerase (abfD).